The following is a 391-amino-acid chain: Probable tRNA sulfurtransferase (391 aa).

In terms of domain architecture, THUMP spans 60 to 167 (DEIIDHIKKV…KDNCYVYTDR (108 aa)). ATP-binding positions include 185 to 186 (LL), 210 to 211 (HF), Arg267, Gly289, and Gln298.

The protein belongs to the ThiI family.

The protein localises to the cytoplasm. The enzyme catalyses [ThiI sulfur-carrier protein]-S-sulfanyl-L-cysteine + a uridine in tRNA + 2 reduced [2Fe-2S]-[ferredoxin] + ATP + H(+) = [ThiI sulfur-carrier protein]-L-cysteine + a 4-thiouridine in tRNA + 2 oxidized [2Fe-2S]-[ferredoxin] + AMP + diphosphate. It catalyses the reaction [ThiS sulfur-carrier protein]-C-terminal Gly-Gly-AMP + S-sulfanyl-L-cysteinyl-[cysteine desulfurase] + AH2 = [ThiS sulfur-carrier protein]-C-terminal-Gly-aminoethanethioate + L-cysteinyl-[cysteine desulfurase] + A + AMP + 2 H(+). It functions in the pathway cofactor biosynthesis; thiamine diphosphate biosynthesis. Catalyzes the ATP-dependent transfer of a sulfur to tRNA to produce 4-thiouridine in position 8 of tRNAs, which functions as a near-UV photosensor. Also catalyzes the transfer of sulfur to the sulfur carrier protein ThiS, forming ThiS-thiocarboxylate. This is a step in the synthesis of thiazole, in the thiamine biosynthesis pathway. The sulfur is donated as persulfide by IscS. The polypeptide is Probable tRNA sulfurtransferase (Finegoldia magna (strain ATCC 29328 / DSM 20472 / WAL 2508) (Peptostreptococcus magnus)).